The primary structure comprises 297 residues: Tyrosine recombinase XerC (297 aa).

A Core-binding (CB) domain is found at 1–84; the sequence is MEEIQVTFLN…TLRTFYEFWM (84 aa). The Tyr recombinase domain occupies 105-286; the sequence is YLPQFFYEEE…SNQQLRKVYL (182 aa). Residues R145, K169, H238, R241, and H264 contribute to the active site. Y273 serves as the catalytic O-(3'-phospho-DNA)-tyrosine intermediate.

It belongs to the 'phage' integrase family. XerC subfamily. Forms a cyclic heterotetrameric complex composed of two molecules of XerC and two molecules of XerD.

It localises to the cytoplasm. Its function is as follows. Site-specific tyrosine recombinase, which acts by catalyzing the cutting and rejoining of the recombining DNA molecules. The XerC-XerD complex is essential to convert dimers of the bacterial chromosome into monomers to permit their segregation at cell division. It also contributes to the segregational stability of plasmids. The chain is Tyrosine recombinase XerC from Staphylococcus haemolyticus (strain JCSC1435).